A 76-amino-acid polypeptide reads, in one-letter code: uncharacterized protein (76 aa).

Its subcellular location is the host cytoplasm. This is an uncharacterized protein from Escherichia phage Mu (Bacteriophage Mu).